The following is a 157-amino-acid chain: Probable succinate transporter subunit YjjB (157 aa).

4 helical membrane-spanning segments follow: residues 2–22 (GIISFIFALAEDMLLAAIPAV), 55–75 (AGFNIEWATFLAALLVGSIGI), 87–107 (IFTVAAVIPMFPGISAYTAMI), and 129–149 (FLKASSIVGALSIGLSIPGLW).

Belongs to the ThrE exporter (TC 2.A.79) family. In terms of assembly, the transporter is composed of YjjB and YjjP.

It localises to the cell inner membrane. Its function is as follows. Involved in succinate export with YjjP. Both proteins are required for export. This is Probable succinate transporter subunit YjjB from Klebsiella pneumoniae (strain 342).